A 590-amino-acid chain; its full sequence is DNA primase (590 aa).

The segment at 37 to 61 adopts a CHC2-type zinc-finger fold; that stretch reads CPFHTEKTPSFIVNPAGAHYHCFGC. Positions 253-333 constitute a Toprim domain; the sequence is KKVILVEGQA…QMSVFVCKLP (81 aa). Residues glutamate 259, aspartate 304, and aspartate 306 each coordinate Mg(2+).

It belongs to the DnaG primase family. In terms of assembly, monomer. Interacts with DnaB. Zn(2+) serves as cofactor. Requires Mg(2+) as cofactor.

The catalysed reaction is ssDNA + n NTP = ssDNA/pppN(pN)n-1 hybrid + (n-1) diphosphate.. Its function is as follows. RNA polymerase that catalyzes the synthesis of short RNA molecules used as primers for DNA polymerase during DNA replication. This Chlamydia pneumoniae (Chlamydophila pneumoniae) protein is DNA primase.